Consider the following 496-residue polypeptide: Transactivator/viroplasmin protein (496 aa).

The tract at residues 102 to 128 (RPNQGIQIPKKNEDHSSSSSKEEKGIQ) is disordered. Over residues 111 to 128 (KKNEDHSSSSSKEEKGIQ) the composition is skewed to basic and acidic residues.

It belongs to the caulimoviridae viroplasmin family.

It is found in the host cytoplasm. Its function is as follows. Enhances the translation of downstream ORFs on polycistronic mRNAs derived from carnation etched ring virus. This chain is Transactivator/viroplasmin protein, found in Dianthus caryophyllus (Carnation).